The primary structure comprises 352 residues: Phosphoribosylformylglycinamidine cyclo-ligase (352 aa).

This sequence belongs to the AIR synthase family.

Its subcellular location is the cytoplasm. The catalysed reaction is 2-formamido-N(1)-(5-O-phospho-beta-D-ribosyl)acetamidine + ATP = 5-amino-1-(5-phospho-beta-D-ribosyl)imidazole + ADP + phosphate + H(+). It functions in the pathway purine metabolism; IMP biosynthesis via de novo pathway; 5-amino-1-(5-phospho-D-ribosyl)imidazole from N(2)-formyl-N(1)-(5-phospho-D-ribosyl)glycinamide: step 2/2. This is Phosphoribosylformylglycinamidine cyclo-ligase from Coxiella burnetii (strain RSA 331 / Henzerling II).